Consider the following 153-residue polypeptide: D-aminoacyl-tRNA deacylase (153 aa).

The Gly-cisPro motif, important for rejection of L-amino acids signature appears at Gly-137–Pro-138.

It belongs to the DTD family. Homodimer.

The protein localises to the cytoplasm. The catalysed reaction is glycyl-tRNA(Ala) + H2O = tRNA(Ala) + glycine + H(+). It catalyses the reaction a D-aminoacyl-tRNA + H2O = a tRNA + a D-alpha-amino acid + H(+). An aminoacyl-tRNA editing enzyme that deacylates mischarged D-aminoacyl-tRNAs. Also deacylates mischarged glycyl-tRNA(Ala), protecting cells against glycine mischarging by AlaRS. Acts via tRNA-based rather than protein-based catalysis; rejects L-amino acids rather than detecting D-amino acids in the active site. By recycling D-aminoacyl-tRNA to D-amino acids and free tRNA molecules, this enzyme counteracts the toxicity associated with the formation of D-aminoacyl-tRNA entities in vivo and helps enforce protein L-homochirality. This is D-aminoacyl-tRNA deacylase from Herpetosiphon aurantiacus (strain ATCC 23779 / DSM 785 / 114-95).